The chain runs to 304 residues: Homoserine kinase (304 aa).

Residue 90–100 coordinates ATP; the sequence is PLARGLGSSAS.

It belongs to the GHMP kinase family. Homoserine kinase subfamily.

Its subcellular location is the cytoplasm. It catalyses the reaction L-homoserine + ATP = O-phospho-L-homoserine + ADP + H(+). It functions in the pathway amino-acid biosynthesis; L-threonine biosynthesis; L-threonine from L-aspartate: step 4/5. In terms of biological role, catalyzes the ATP-dependent phosphorylation of L-homoserine to L-homoserine phosphate. The polypeptide is Homoserine kinase (Staphylococcus aureus (strain MRSA252)).